The sequence spans 541 residues: Membrane protein insertase YidC (541 aa).

Transmembrane regions (helical) follow at residues 6 to 26, 325 to 345, 349 to 369, 420 to 440, 457 to 477, and 500 to 520; these read NILL…WQAD, LVVD…LLMF, FVGN…GLLF, GGCL…WVLL, LSVQ…MFIM, and VIFT…WLVG.

The protein belongs to the OXA1/ALB3/YidC family. Type 1 subfamily. Interacts with the Sec translocase complex via SecD. Specifically interacts with transmembrane segments of nascent integral membrane proteins during membrane integration.

It is found in the cell inner membrane. Required for the insertion and/or proper folding and/or complex formation of integral membrane proteins into the membrane. Involved in integration of membrane proteins that insert both dependently and independently of the Sec translocase complex, as well as at least some lipoproteins. Aids folding of multispanning membrane proteins. This chain is Membrane protein insertase YidC, found in Shewanella sp. (strain W3-18-1).